We begin with the raw amino-acid sequence, 212 residues long: Imidazole glycerol phosphate synthase subunit HisH (212 aa).

Residues 2-212 enclose the Glutamine amidotransferase type-1 domain; the sequence is RVVVIDYNGG…ILGNFLRWTS (211 aa). Cys-85 acts as the Nucleophile in catalysis. Active-site residues include His-192 and Glu-194.

In terms of assembly, heterodimer of HisH and HisF.

It localises to the cytoplasm. The enzyme catalyses 5-[(5-phospho-1-deoxy-D-ribulos-1-ylimino)methylamino]-1-(5-phospho-beta-D-ribosyl)imidazole-4-carboxamide + L-glutamine = D-erythro-1-(imidazol-4-yl)glycerol 3-phosphate + 5-amino-1-(5-phospho-beta-D-ribosyl)imidazole-4-carboxamide + L-glutamate + H(+). It carries out the reaction L-glutamine + H2O = L-glutamate + NH4(+). It participates in amino-acid biosynthesis; L-histidine biosynthesis; L-histidine from 5-phospho-alpha-D-ribose 1-diphosphate: step 5/9. Functionally, IGPS catalyzes the conversion of PRFAR and glutamine to IGP, AICAR and glutamate. The HisH subunit catalyzes the hydrolysis of glutamine to glutamate and ammonia as part of the synthesis of IGP and AICAR. The resulting ammonia molecule is channeled to the active site of HisF. This chain is Imidazole glycerol phosphate synthase subunit HisH, found in Gluconobacter oxydans (strain 621H) (Gluconobacter suboxydans).